Reading from the N-terminus, the 112-residue chain is Thioredoxin-like protein YdfQ (112 aa).

The Thioredoxin domain occupies 1 to 107; that stretch reads MKEMTGLHSL…LEQKLKRVYR (107 aa). Residues cysteine 32 and cysteine 35 are joined by a disulfide bond.

This chain is Thioredoxin-like protein YdfQ (ydfQ), found in Bacillus subtilis (strain 168).